A 74-amino-acid chain; its full sequence is UPF0435 protein ABC2298 (74 aa).

This sequence belongs to the UPF0435 family.

This chain is UPF0435 protein ABC2298, found in Shouchella clausii (strain KSM-K16) (Alkalihalobacillus clausii).